A 247-amino-acid polypeptide reads, in one-letter code: Eukaryotic translation initiation factor 6 (247 aa).

Phosphoserine; by CK1 is present on residues serine 174 and serine 175.

It belongs to the eIF-6 family. As to quaternary structure, monomer. Associates with the 60S ribosomal subunit. In terms of processing, phosphorylation at Ser-174 and Ser-175 promotes nuclear export.

The protein localises to the cytoplasm. Its subcellular location is the nucleus. It localises to the nucleolus. In terms of biological role, binds to the 60S ribosomal subunit and prevents its association with the 40S ribosomal subunit to form the 80S initiation complex in the cytoplasm. Is also involved in ribosome biogenesis. Associates with pre-60S subunits in the nucleus and is involved in its nuclear export. This Talaromyces stipitatus (strain ATCC 10500 / CBS 375.48 / QM 6759 / NRRL 1006) (Penicillium stipitatum) protein is Eukaryotic translation initiation factor 6 (tif6).